A 483-amino-acid chain; its full sequence is Phosphoglucosamine mutase (483 aa).

Ser-131 acts as the Phosphoserine intermediate in catalysis. Mg(2+)-binding residues include Ser-131, Asp-272, Asp-274, and Asp-276. A Phosphoserine modification is found at Ser-131.

Belongs to the phosphohexose mutase family. The cofactor is Mg(2+). Activated by phosphorylation.

It carries out the reaction alpha-D-glucosamine 1-phosphate = D-glucosamine 6-phosphate. Catalyzes the conversion of glucosamine-6-phosphate to glucosamine-1-phosphate. This chain is Phosphoglucosamine mutase, found in Magnetococcus marinus (strain ATCC BAA-1437 / JCM 17883 / MC-1).